A 481-amino-acid chain; its full sequence is Phosphatidylinositol 4-kinase type 2-beta (481 aa).

A compositionally biased stretch (basic and acidic residues) spans 1–11 (MEDPSEPDRLA). Residues 1–82 (MEDPSEPDRL…VSRSSSAELD (82 aa)) are disordered. Phosphoserine occurs at positions 12, 17, and 45. Over residues 53 to 64 (AGEEGEAGDEEL) the composition is skewed to acidic residues. The PI3K/PI4K catalytic domain maps to 120–451 (GIFPERISQG…VQIPCVIVER (332 aa)). Residues 126–132 (ISQGSSG) are G-loop. Residues serine 133 and lysine 148 each coordinate ATP. The interval 153–155 (EPY) is important for substrate binding. The important for interaction with membranes stretch occupies residues 161–174 (KWTKYVHKVCCPCC). ATP-binding positions include 257-260 (QLFV) and 271-272 (RK). The important for interaction with membranes stretch occupies residues 264-272 (KEAEYWLRK). The interval 301-309 (RNTDRGNDN) is catalytic loop. The interval 342-362 (AIDNGLAFPFKHPDEWRAYPF) is activation loop. An ATP-binding site is contributed by aspartate 344. Positions 357–366 (WRAYPFHWAW) are important for interaction with membranes.

This sequence belongs to the PI3/PI4-kinase family. Type II PI4K subfamily. Widely expressed.

The protein localises to the cytoplasm. It is found in the cytosol. Its subcellular location is the golgi apparatus membrane. It localises to the endoplasmic reticulum membrane. The protein resides in the cell membrane. The protein localises to the early endosome membrane. It catalyses the reaction a 1,2-diacyl-sn-glycero-3-phospho-(1D-myo-inositol) + ATP = a 1,2-diacyl-sn-glycero-3-phospho-(1D-myo-inositol 4-phosphate) + ADP + H(+). Inhibited by phenylarsine oxide and adenosine. Activation through membrane association is stimulated by active RAC1. Its function is as follows. Together with PI4K2A and the type III PI4Ks (PIK4CA and PIK4CB) it contributes to the overall PI4-kinase activity of the cell. This contribution may be especially significant in plasma membrane, endosomal and Golgi compartments. The phosphorylation of phosphatidylinositol (PI) to PI4P is the first committed step in the generation of phosphatidylinositol 4,5-bisphosphate (PIP2), a precursor of the second messenger inositol 1,4,5-trisphosphate (InsP3). Contributes to the production of InsP3 in stimulated cells and is likely to be involved in the regulation of vesicular trafficking. This Homo sapiens (Human) protein is Phosphatidylinositol 4-kinase type 2-beta (PI4K2B).